The primary structure comprises 199 residues: ATP-dependent Clp protease proteolytic subunit (199 aa).

Catalysis depends on Ser99, which acts as the Nucleophile. Residue His124 is part of the active site.

It belongs to the peptidase S14 family. In terms of assembly, fourteen ClpP subunits assemble into 2 heptameric rings which stack back to back to give a disk-like structure with a central cavity, resembling the structure of eukaryotic proteasomes.

The protein localises to the cytoplasm. The catalysed reaction is Hydrolysis of proteins to small peptides in the presence of ATP and magnesium. alpha-casein is the usual test substrate. In the absence of ATP, only oligopeptides shorter than five residues are hydrolyzed (such as succinyl-Leu-Tyr-|-NHMec, and Leu-Tyr-Leu-|-Tyr-Trp, in which cleavage of the -Tyr-|-Leu- and -Tyr-|-Trp bonds also occurs).. In terms of biological role, cleaves peptides in various proteins in a process that requires ATP hydrolysis. Has a chymotrypsin-like activity. Plays a major role in the degradation of misfolded proteins. This is ATP-dependent Clp protease proteolytic subunit from Moorella thermoacetica (strain ATCC 39073 / JCM 9320).